Consider the following 462-residue polypeptide: Hydroxymethylglutaryl-CoA synthase (462 aa).

Glu86 serves as the catalytic Proton donor/acceptor. The active-site Acyl-thioester intermediate is Cys120. (3S)-3-hydroxy-3-methylglutaryl-CoA is bound by residues Cys120, Thr211, His261, Lys270, Asn338, and Ser372. The active-site Proton donor/acceptor is His261.

This sequence belongs to the thiolase-like superfamily. HMG-CoA synthase family.

It catalyses the reaction acetoacetyl-CoA + acetyl-CoA + H2O = (3S)-3-hydroxy-3-methylglutaryl-CoA + CoA + H(+). It functions in the pathway siderophore biosynthesis. Its function is as follows. Hydroxymethylglutaryl-CoA synthase involved in the biosynthesis of siderophore ferrichrome A which is contributing to organismal virulence. The first step of ferrichrome A biosynthesis is performed by the HMG-CoA synthase hcs1 which catalyzes the generation of HMG-CoA and CoA using acetoacetyl-CoA and acetyl-CoA as substrates. The enoyl-CoA isomerase/hydratase fer4 then catalyzes the conversion of hcs1-produced HMG-CoA to methylglutaconyl-CoA. The acyltransferase fer5 then fuses the fer4-generated methylglutaconyl-CoA with sid1-generated hydroxyornithine to yield methylglutaconyl hydroxyornithine. Methylglutaconyl hydroxyornithine is then available for use by the NRPS fer3 to generate ferrichrome A. The chain is Hydroxymethylglutaryl-CoA synthase from Mycosarcoma maydis (Corn smut fungus).